A 362-amino-acid polypeptide reads, in one-letter code: MKHVYNFSAGPAMMPKAVLAQAQQELLNWQQQGTSVMEVSHRSNAFMALATQTEQDLRQLYAIPDNYKVLFLQGGAHGQFAAIPMNLIGKKGKALYLISGHWSNRSAQEARNFCEVDQLNILTQDEAGVFSVNQTDFSDIAEQYDYVHYCPNETISGVEIPDIPIVGKAVLVADMSSNILSRNIDISKFGLIYAGAQKNLGPAGITIVIIRQDLIGNAQRATPSIWNYATQVNADSMINTPPTFAWYLCSLVFKHLRAAGGLASVEQRNQQKAALLYQYLDNSHFYHNYVAPQNRSLMNVTFTTNNDELNAKFVAEAAENGLHALKGHKVVGGMRASIYNAMPLDGVEALIEFMQKFAQENR.

Arg-42 serves as a coordination point for L-glutamate. Pyridoxal 5'-phosphate contacts are provided by Trp-102, Thr-154, Asp-174, and Gln-197. The residue at position 198 (Lys-198) is an N6-(pyridoxal phosphate)lysine. 239–240 (NT) contributes to the pyridoxal 5'-phosphate binding site.

Belongs to the class-V pyridoxal-phosphate-dependent aminotransferase family. SerC subfamily. In terms of assembly, homodimer. It depends on pyridoxal 5'-phosphate as a cofactor.

Its subcellular location is the cytoplasm. The enzyme catalyses O-phospho-L-serine + 2-oxoglutarate = 3-phosphooxypyruvate + L-glutamate. It carries out the reaction 4-(phosphooxy)-L-threonine + 2-oxoglutarate = (R)-3-hydroxy-2-oxo-4-phosphooxybutanoate + L-glutamate. Its pathway is amino-acid biosynthesis; L-serine biosynthesis; L-serine from 3-phospho-D-glycerate: step 2/3. It participates in cofactor biosynthesis; pyridoxine 5'-phosphate biosynthesis; pyridoxine 5'-phosphate from D-erythrose 4-phosphate: step 3/5. Catalyzes the reversible conversion of 3-phosphohydroxypyruvate to phosphoserine and of 3-hydroxy-2-oxo-4-phosphonooxybutanoate to phosphohydroxythreonine. The sequence is that of Phosphoserine aminotransferase from Haemophilus ducreyi (strain 35000HP / ATCC 700724).